Here is a 479-residue protein sequence, read N- to C-terminus: Ribosomal RNA small subunit methyltransferase F (479 aa).

Residues 125-131 (AAAPGSK), glutamate 149, aspartate 176, and aspartate 194 contribute to the S-adenosyl-L-methionine site. Cysteine 247 serves as the catalytic Nucleophile.

It belongs to the class I-like SAM-binding methyltransferase superfamily. RsmB/NOP family.

It localises to the cytoplasm. It catalyses the reaction cytidine(1407) in 16S rRNA + S-adenosyl-L-methionine = 5-methylcytidine(1407) in 16S rRNA + S-adenosyl-L-homocysteine + H(+). Its function is as follows. Specifically methylates the cytosine at position 1407 (m5C1407) of 16S rRNA. The polypeptide is Ribosomal RNA small subunit methyltransferase F (Salmonella enteritidis PT4 (strain P125109)).